The sequence spans 597 residues: Cysteine/serine-rich nuclear protein 3 (597 aa).

Disordered regions lie at residues 22 to 64 and 348 to 407; these read EDVD…TPSS and CQGD…GFVE. The span at 42-52 shows a compositional bias: low complexity; the sequence is SSESADSGDSV. The segment covering 53–64 has biased composition (polar residues); the sequence is NPSTSNHFTPSS. The segment covering 348 to 359 has biased composition (acidic residues); it reads CQGDEEEEEEDG. The segment covering 361 to 376 has biased composition (polar residues); that stretch reads SFCSGATDSSTQSLAP. Positions 378 to 401 are enriched in acidic residues; sequence ESDEEEEEEEEEEEEEEEDDDDDK.

Belongs to the AXUD1 family. In terms of tissue distribution, detected only in the brain of 15 dpc, 18 dpc, newborn and P6 mice (at protein level).

It is found in the nucleus. Functionally, binds to the consensus sequence 5'-AGAGTG-3' and has transcriptional activator activity. Plays a role in apoptosis. The protein is Cysteine/serine-rich nuclear protein 3 (Csrnp3) of Mus musculus (Mouse).